A 288-amino-acid chain; its full sequence is Formamidopyrimidine-DNA glycosylase (288 aa).

Residue Pro-2 is the Schiff-base intermediate with DNA of the active site. Residue Glu-3 is the Proton donor of the active site. Lys-58 functions as the Proton donor; for beta-elimination activity in the catalytic mechanism. Residues His-99, Arg-118, and Lys-161 each contribute to the DNA site. The FPG-type zinc-finger motif lies at 252–288; it reads RVYDREAEPCPREGCGGTIKRIVQAGRSTFFCAKCQR. The Proton donor; for delta-elimination activity role is filled by Arg-278.

Belongs to the FPG family. Monomer. Requires Zn(2+) as cofactor.

The enzyme catalyses Hydrolysis of DNA containing ring-opened 7-methylguanine residues, releasing 2,6-diamino-4-hydroxy-5-(N-methyl)formamidopyrimidine.. It catalyses the reaction 2'-deoxyribonucleotide-(2'-deoxyribose 5'-phosphate)-2'-deoxyribonucleotide-DNA = a 3'-end 2'-deoxyribonucleotide-(2,3-dehydro-2,3-deoxyribose 5'-phosphate)-DNA + a 5'-end 5'-phospho-2'-deoxyribonucleoside-DNA + H(+). In terms of biological role, involved in base excision repair of DNA damaged by oxidation or by mutagenic agents. Acts as a DNA glycosylase that recognizes and removes damaged bases. Has a preference for oxidized purines, such as 7,8-dihydro-8-oxoguanine (8-oxoG). Has AP (apurinic/apyrimidinic) lyase activity and introduces nicks in the DNA strand. Cleaves the DNA backbone by beta-delta elimination to generate a single-strand break at the site of the removed base with both 3'- and 5'-phosphates. This is Formamidopyrimidine-DNA glycosylase from Beijerinckia indica subsp. indica (strain ATCC 9039 / DSM 1715 / NCIMB 8712).